A 336-amino-acid polypeptide reads, in one-letter code: Transmembrane protein 19 (336 aa).

Transmembrane regions (helical) follow at residues 19-39 (IVIL…SITA), 49-69 (ISPW…WHGI), 86-106 (GFIL…FFFI), 224-244 (ISSL…QLIF), 250-270 (IAAP…LGSL), and 313-333 (VNLF…WSFW).

Belongs to the TMEM19 family.

Its subcellular location is the membrane. The chain is Transmembrane protein 19 (tmem19) from Xenopus tropicalis (Western clawed frog).